Here is a 417-residue protein sequence, read N- to C-terminus: Serine hydroxymethyltransferase (417 aa).

(6S)-5,6,7,8-tetrahydrofolate-binding positions include Leu-122 and 126-128 (GHL). An N6-(pyridoxal phosphate)lysine modification is found at Lys-230. Residue 355–357 (SPF) participates in (6S)-5,6,7,8-tetrahydrofolate binding.

This sequence belongs to the SHMT family. In terms of assembly, homodimer. Pyridoxal 5'-phosphate is required as a cofactor.

Its subcellular location is the cytoplasm. The enzyme catalyses (6R)-5,10-methylene-5,6,7,8-tetrahydrofolate + glycine + H2O = (6S)-5,6,7,8-tetrahydrofolate + L-serine. The protein operates within one-carbon metabolism; tetrahydrofolate interconversion. Its pathway is amino-acid biosynthesis; glycine biosynthesis; glycine from L-serine: step 1/1. Functionally, catalyzes the reversible interconversion of serine and glycine with tetrahydrofolate (THF) serving as the one-carbon carrier. This reaction serves as the major source of one-carbon groups required for the biosynthesis of purines, thymidylate, methionine, and other important biomolecules. Also exhibits THF-independent aldolase activity toward beta-hydroxyamino acids, producing glycine and aldehydes, via a retro-aldol mechanism. The chain is Serine hydroxymethyltransferase from Francisella tularensis subsp. novicida (strain U112).